Reading from the N-terminus, the 192-residue chain is 7-methyl-GTP pyrophosphatase (192 aa).

Residue Asp69 is the Proton acceptor of the active site.

The protein belongs to the Maf family. YceF subfamily. A divalent metal cation is required as a cofactor.

Its subcellular location is the cytoplasm. The enzyme catalyses N(7)-methyl-GTP + H2O = N(7)-methyl-GMP + diphosphate + H(+). Functionally, nucleoside triphosphate pyrophosphatase that hydrolyzes 7-methyl-GTP (m(7)GTP). May have a dual role in cell division arrest and in preventing the incorporation of modified nucleotides into cellular nucleic acids. This is 7-methyl-GTP pyrophosphatase (maf-2) from Pseudomonas putida (strain ATCC 47054 / DSM 6125 / CFBP 8728 / NCIMB 11950 / KT2440).